A 74-amino-acid chain; its full sequence is Kappa-scoloptoxin(07)-Ssm2c (74 aa).

The signal sequence occupies residues 1–19 (MLVFYAPLFVSIFSNTVMG). Residues 20-41 (ATIDKPIPKPILREAIEKIAVN) constitute a propeptide that is removed on maturation.

It belongs to the scoloptoxin-07 family. Post-translationally, contains 3 disulfide bonds. As to expression, expressed by the venom gland.

It is found in the secreted. Functionally, inhibits voltage-gated potassium channels. The sequence is that of Kappa-scoloptoxin(07)-Ssm2c from Scolopendra mutilans (Chinese red-headed centipede).